A 214-amino-acid polypeptide reads, in one-letter code: ATP-dependent Clp protease proteolytic subunit (214 aa).

The active-site Nucleophile is Ser110. His135 is an active-site residue.

The protein belongs to the peptidase S14 family. In terms of assembly, fourteen ClpP subunits assemble into 2 heptameric rings which stack back to back to give a disk-like structure with a central cavity, resembling the structure of eukaryotic proteasomes.

The protein localises to the cytoplasm. The catalysed reaction is Hydrolysis of proteins to small peptides in the presence of ATP and magnesium. alpha-casein is the usual test substrate. In the absence of ATP, only oligopeptides shorter than five residues are hydrolyzed (such as succinyl-Leu-Tyr-|-NHMec, and Leu-Tyr-Leu-|-Tyr-Trp, in which cleavage of the -Tyr-|-Leu- and -Tyr-|-Trp bonds also occurs).. Its function is as follows. Cleaves peptides in various proteins in a process that requires ATP hydrolysis. Has a chymotrypsin-like activity. Plays a major role in the degradation of misfolded proteins. The chain is ATP-dependent Clp protease proteolytic subunit from Legionella pneumophila (strain Corby).